The sequence spans 260 residues: MKLGESMKKNATLSVKIIAFLGVLIFTVMPVANAMHIMEGYLSPKWCIIWGILVLPFLIKGSLNVKKVVSDDQRIKLLFAMAGAFIFILSALKLPSFTGTSSHPTGIGLSTILFGPAITTVLGVIVLLFQALLLAHGGISTLGANSFAMAVMGPLMAYGVYKILQKIKIPQNINIFFSATVGDLFTYCITAIQLGIDHPLEYDGIFASIERYLGVFAITQIPIAIAEGILTVLIFNVIAKYSSKELGKLGILNNSEEAEL.

The first 34 residues, 1–34 (MKLGESMKKNATLSVKIIAFLGVLIFTVMPVANA), serve as a signal peptide directing secretion. A run of 6 helical transmembrane segments spans residues 39–59 (EGYL…PFLI), 77–97 (LLFA…LPSF), 109–129 (LSTI…VLLF), 132–152 (LLLA…MAVM), 175–195 (IFFS…IQLG), and 215–235 (VFAI…VLIF).

This sequence belongs to the CbiM family. In terms of assembly, forms an energy-coupling factor (ECF) transporter complex composed of an ATP-binding protein (A component, CbiO), a transmembrane protein (T component, CbiQ) and 2 possible substrate-capture proteins (S components, CbiM and CbiN) of unknown stoichimetry.

The protein resides in the cell membrane. It functions in the pathway cofactor biosynthesis; adenosylcobalamin biosynthesis. Part of the energy-coupling factor (ECF) transporter complex CbiMNOQ involved in cobalt import. The protein is Cobalt transport protein CbiM of Clostridium cellulovorans (strain ATCC 35296 / DSM 3052 / OCM 3 / 743B).